A 352-amino-acid chain; its full sequence is Probable RNA methyltransferase Mpe_A3613 (352 aa).

The Proton acceptor role is filled by E88. The Radical SAM core domain maps to 91 to 317 (LLPRDGLCVS…TKLRRSAGQD (227 aa)). The cysteines at positions 98 and 322 are disulfide-linked. 3 residues coordinate [4Fe-4S] cluster: C105, C109, and C112. S-adenosyl-L-methionine-binding positions include 150–151 (GE), S180, 203–205 (SLH), and N279. C322 serves as the catalytic S-methylcysteine intermediate.

The protein belongs to the radical SAM superfamily. RlmN family. [4Fe-4S] cluster is required as a cofactor.

The protein resides in the cytoplasm. In Methylibium petroleiphilum (strain ATCC BAA-1232 / LMG 22953 / PM1), this protein is Probable RNA methyltransferase Mpe_A3613.